A 396-amino-acid polypeptide reads, in one-letter code: Probable sugar efflux transporter (396 aa).

A run of 12 helical transmembrane segments spans residues 15-35, 50-70, 81-101, 103-123, 136-156, 170-190, 209-229, 246-266, 275-295, 299-319, 333-353, and 364-384; these read VVTLAVAAFIFNTTEFVPVGL, VGIMLTIYAWVVALMSLPFML, LICLFVVFIASHVLSFLSWSF, VLVISRIGVAFAHAIFWSITA, AQALSLIATGTALAMVLGLPL, FFAIGIGALVTLLCLIKLLPL, PALMSIYLLTVVVVTAHYTAY, FATALLLLLGGAGIIGSVIFG, ALVSTAIALLLVCLALLLPAA, IHLGVLSIFWGIAMMIIGLGM, VAMALFSGIFNIGIGAGALVG, and MIGYVGAVPAFAALIWSIIIF.

The protein belongs to the major facilitator superfamily. SotB (TC 2.A.1.2) family.

The protein resides in the cell inner membrane. Involved in the efflux of sugars. The physiological role may be the reduction of the intracellular concentration of toxic sugars or sugar metabolites. In Shigella flexneri serotype 5b (strain 8401), this protein is Probable sugar efflux transporter.